The chain runs to 572 residues: Mitochondrial distribution and morphology protein 34 (572 aa).

Residues 1 to 195 (MAFNFNWSPL…LPAIIHRLSL (195 aa)) form the SMP-LTD domain. Disordered regions lie at residues 208 to 236 (LQTQ…VDAL), 296 to 405 (PSDQ…CSAP), 455 to 518 (RDTA…PFIN), and 551 to 572 (NACG…AYGH). Polar residues predominate over residues 296–347 (PSDQTDASGGVTSPFSPVLSRTQSQVGSMSSFPDSASMVSNQSRSSTPSHTF). The segment covering 358–370 (RHSKAHARKRKKR) has biased composition (basic residues). Residues 371 to 381 (VVDLRRPKTTD) are compositionally biased toward basic and acidic residues. 2 stretches are compositionally biased toward polar residues: residues 387–401 (SDES…TPSI) and 498–511 (ATGS…QLPS).

The protein belongs to the MDM34 family. As to quaternary structure, component of the ER-mitochondria encounter structure (ERMES) or MDM complex, composed of mmm1, mdm10, mdm12 and mdm34.

The protein localises to the mitochondrion outer membrane. Functionally, component of the ERMES/MDM complex, which serves as a molecular tether to connect the endoplasmic reticulum (ER) and mitochondria. Components of this complex are involved in the control of mitochondrial shape and protein biogenesis, and function in nonvesicular lipid trafficking between the ER and mitochondria. Mdm34 is required for the interaction of the ER-resident membrane protein mmm1 and the outer mitochondrial membrane-resident beta-barrel protein mdm10. The polypeptide is Mitochondrial distribution and morphology protein 34 (Neosartorya fischeri (strain ATCC 1020 / DSM 3700 / CBS 544.65 / FGSC A1164 / JCM 1740 / NRRL 181 / WB 181) (Aspergillus fischerianus)).